Reading from the N-terminus, the 63-residue chain is UPF0512 protein X (63 aa).

Belongs to the UPF0512 family.

The protein is UPF0512 protein X of Dictyostelium discoideum (Social amoeba).